The primary structure comprises 140 residues: Large-conductance mechanosensitive channel 2 (140 aa).

A run of 3 helical transmembrane segments spans residues 8 to 28 (FISK…AAFG), 30 to 50 (IVDS…FGGL), and 81 to 101 (GSFI…FLMV).

The protein belongs to the MscL family. Homopentamer.

Its subcellular location is the cell inner membrane. Channel that opens in response to stretch forces in the membrane lipid bilayer. May participate in the regulation of osmotic pressure changes within the cell. In Mesorhizobium japonicum (strain LMG 29417 / CECT 9101 / MAFF 303099) (Mesorhizobium loti (strain MAFF 303099)), this protein is Large-conductance mechanosensitive channel 2.